A 436-amino-acid chain; its full sequence is Serine hydroxymethyltransferase (436 aa).

Residues L120 and G124–L126 each bind (6S)-5,6,7,8-tetrahydrofolate. An N6-(pyridoxal phosphate)lysine modification is found at K229.

This sequence belongs to the SHMT family. Homodimer. Requires pyridoxal 5'-phosphate as cofactor.

The protein localises to the cytoplasm. It catalyses the reaction (6R)-5,10-methylene-5,6,7,8-tetrahydrofolate + glycine + H2O = (6S)-5,6,7,8-tetrahydrofolate + L-serine. It participates in one-carbon metabolism; tetrahydrofolate interconversion. The protein operates within amino-acid biosynthesis; glycine biosynthesis; glycine from L-serine: step 1/1. Its function is as follows. Catalyzes the reversible interconversion of serine and glycine with tetrahydrofolate (THF) serving as the one-carbon carrier. This reaction serves as the major source of one-carbon groups required for the biosynthesis of purines, thymidylate, methionine, and other important biomolecules. Also exhibits THF-independent aldolase activity toward beta-hydroxyamino acids, producing glycine and aldehydes, via a retro-aldol mechanism. This is Serine hydroxymethyltransferase from Roseiflexus castenholzii (strain DSM 13941 / HLO8).